The chain runs to 274 residues: NH(3)-dependent NAD(+) synthetase (274 aa).

Residue 46-53 (GISGGQDS) participates in ATP binding. D52 provides a ligand contact to Mg(2+). R140 lines the deamido-NAD(+) pocket. Position 160 (T160) interacts with ATP. E165 contributes to the Mg(2+) binding site. Residues K173 and D180 each contribute to the deamido-NAD(+) site. ATP-binding residues include K189 and T211. 260–261 (HK) contributes to the deamido-NAD(+) binding site.

This sequence belongs to the NAD synthetase family. Homodimer.

The enzyme catalyses deamido-NAD(+) + NH4(+) + ATP = AMP + diphosphate + NAD(+) + H(+). It functions in the pathway cofactor biosynthesis; NAD(+) biosynthesis; NAD(+) from deamido-NAD(+) (ammonia route): step 1/1. Its function is as follows. Catalyzes the ATP-dependent amidation of deamido-NAD to form NAD. Uses ammonia as a nitrogen source. This Streptococcus mutans serotype c (strain ATCC 700610 / UA159) protein is NH(3)-dependent NAD(+) synthetase.